The chain runs to 362 residues: Vignain (362 aa).

An N-terminal signal peptide occupies residues 1-20 (MATKKLLWVVLSFSLVLGVA). A propeptide spans 21–131 (NSFDFHDKDL…YEKVVSVPPS (111 aa)) (activation peptide). 3 disulfides stabilise this stretch: cysteine 149-cysteine 191, cysteine 183-cysteine 224, and cysteine 282-cysteine 334. The active site involves cysteine 152. Catalysis depends on residues histidine 288 and asparagine 309. Residues asparagine 326 and asparagine 346 are each glycosylated (N-linked (GlcNAc...) asparagine). Positions 359-362 (KDEL) match the Prevents secretion from ER motif.

It belongs to the peptidase C1 family. In terms of assembly, monomer.

The protein resides in the endoplasmic reticulum lumen. Thought to be involved in the hydrolysis of stored seed proteins. This is Vignain from Phaseolus vulgaris (Kidney bean).